The primary structure comprises 319 residues: G-protein coupled receptor 171 (319 aa).

Residues 1 to 21 (MTNSSFFCPVYKDLEPFTYFF) lie on the Extracellular side of the membrane. N-linked (GlcNAc...) asparagine glycosylation is present at N3. A helical membrane pass occupies residues 22–42 (YLVFLVGIIGSCFATWAFIQK). Residues 43-48 (NTNHRC) lie on the Cytoplasmic side of the membrane. A helical transmembrane segment spans residues 49 to 69 (VSIYLINLLTADFLLTLALPV). At 70–89 (KIVVDLGVAPWKLKIFHCQV) the chain is on the extracellular side. A helical transmembrane segment spans residues 90 to 110 (TACLIYINMYLSIIFLAFVSI). The Cytoplasmic portion of the chain corresponds to 111-132 (DRCLQLTHSCKIYRIQEPGFAK). Residues 133–153 (MISTVVWLMVLLIMVPNMMIP) traverse the membrane as a helical segment. The Extracellular segment spans residues 154–181 (IKDIKEKSNVGCMEFKKEFGRNWHLLTN). Residues 182–202 (FICVAIFLNFSAIILISNCLV) form a helical membrane-spanning segment. The Cytoplasmic segment spans residues 203–224 (IRQLYRNKDNENYPNVKKALIN). Residues 225–245 (ILLVTTGYIICFVPYHIVRIP) form a helical membrane-spanning segment. The Extracellular portion of the chain corresponds to 246–268 (YTLSQTEVITDCSTRISLFKAKE). A helical transmembrane segment spans residues 269-289 (ATLLLAVSNLCFDPILYYHLS). Over 290-319 (KAFRSKVTETFASPKETKAQKEKLRCENNA) the chain is Cytoplasmic.

It belongs to the G-protein coupled receptor 1 family. As to expression, expressed in both T-cell subsets and natural killer cells, while it is undetectable in B cells or CD14(+) monocytes. Expressed in peripheral blood mononuclear cells (PBMC) and Jurkat cells (at protein level).

The protein resides in the cell membrane. Its function is as follows. G-protein coupled receptor for Big LEN, a 16-amino acid neuropeptide produced from the precursor protein, proSAAS (encoded by PCSK1N). Acts through a G(i)-alpha-mediated pathway in response to Big LEN. Big LEN-GPR171 system plays an important role in regulating feeding and metabolism. Also plays a role in modulating fear and anxiety-like behaviors in the basolateral amygdala. Big LEN-GPR171 modulates the mu-type opioid receptor signaling and antinociception. Acts as a negative regulator T cell function. This Homo sapiens (Human) protein is G-protein coupled receptor 171.